A 278-amino-acid chain; its full sequence is MKKNRAFLKWAGGKYPLLDDIKRHLPKGECLVEPFVGAGSVFLNTDFSRYILADINSDLISLYNIVKLRTDEYVQASRELFMPETNQAEVYYQLREEFNTCQDPFRRAVLFLYLNRYGYNGLCRYNLRGEFNVPFGRYKRPYFPEAELYHFAEKAQNAFFYCESYADSMARADKSSVVYCDPPYAPLSATANFTAYHTNSFSLTQQAHLAEIAENLVSNRIPVLISNHDTALTREWYQLAKLHVVKVRPSISSNGGTRKKVDELLALYQPGVATPARK.

S-adenosyl-L-methionine contacts are provided by W10, K14, D54, and D181.

The protein belongs to the N(4)/N(6)-methyltransferase family.

It carries out the reaction a 2'-deoxyadenosine in DNA + S-adenosyl-L-methionine = an N(6)-methyl-2'-deoxyadenosine in DNA + S-adenosyl-L-homocysteine + H(+). Functionally, an alpha subtype methylase, recognizes the double-stranded sequence 5'-GATC-3' and methylates A-2. May be involved in methyl-directed DNA mismatch repair, initiation of chromosome replication and gene expression. This is DNA adenine methylase (dam) from Salmonella typhimurium.